The chain runs to 353 residues: RNA 3'-terminal phosphate cyclase (353 aa).

Residues glutamine 103 and 297–301 each bind ATP; that span reads HLADQ. The Tele-AMP-histidine intermediate role is filled by histidine 322.

It belongs to the RNA 3'-terminal cyclase family. Type 1 subfamily.

The protein localises to the cytoplasm. It carries out the reaction a 3'-end 3'-phospho-ribonucleotide-RNA + ATP = a 3'-end 2',3'-cyclophospho-ribonucleotide-RNA + AMP + diphosphate. In terms of biological role, catalyzes the conversion of 3'-phosphate to a 2',3'-cyclic phosphodiester at the end of RNA. The mechanism of action of the enzyme occurs in 3 steps: (A) adenylation of the enzyme by ATP; (B) transfer of adenylate to an RNA-N3'P to produce RNA-N3'PP5'A; (C) and attack of the adjacent 2'-hydroxyl on the 3'-phosphorus in the diester linkage to produce the cyclic end product. The biological role of this enzyme is unknown but it is likely to function in some aspects of cellular RNA processing. The protein is RNA 3'-terminal phosphate cyclase of Salmonella heidelberg (strain SL476).